The chain runs to 706 residues: MARTTPLERVRNIGIAAHIDAGKTTTTERILFYSGVVHKIGEVHEGNTVTDWMVQERERGITITAAAITTAWTKRDPQNPTQPMPGALEHKINIIDTPGHVDFTIEVERSMRVLDGVIAVFCSVGGVQPQSETVWRQANRYSVPRIVFVNKMDRTGANFYRVYDQIRDRLRANAVPIQLPIGAEDTLRGLIDLVRMRAYLYKNDIGTDIEETEIPADMQEQADEFRTKLVEAVAEADDVLMEKYLEGEDLTEEEIRAGLRQGTIAGTIVPMLCGSAFKNKGVQLLLDAVIDYLPAPTEVPAIQGTLPDGTEVERKADDAQPLAGLAFKIMSDPYGRLTFVRVYSGILKKGSYVLNSTKGKKERISRLIVLKADDRIEVDELRAGDLGAALGLKDTFTGDTLCDDSAPVILESLFIPEPVISVAVEPKTKQDMEKLSKALQSLSEEDPTFRVSVDPETNQTVIAGMGELHLEILVDRMLREFNVGANVGAPQVAYRETVRKPVRTEGKFIRQSGGKGQYGHVVIELEPGDPGSGFEFVSKIVGGVVPKEYIGPAEQGMKEACESGILAGYPVIDLKVTMVDGSFHEVDSSEMAFKIAGSMAIKDAVMKANPVLLEPMMKVEVEVPEDFLGSVMGDLISRRGQIEGQTATEGIAKVTAKVPLERMFGYATDIRSNTQGRGIFSMEFSHYEEVPRNVAEAIIAKNKGNA.

In terms of domain architecture, tr-type G spans 8–297 (ERVRNIGIAA…AVIDYLPAPT (290 aa)). GTP contacts are provided by residues 17 to 24 (AHIDAGKT), 96 to 100 (DTPGH), and 150 to 153 (NKMD).

The protein belongs to the TRAFAC class translation factor GTPase superfamily. Classic translation factor GTPase family. EF-G/EF-2 subfamily.

The protein localises to the cytoplasm. Functionally, catalyzes the GTP-dependent ribosomal translocation step during translation elongation. During this step, the ribosome changes from the pre-translocational (PRE) to the post-translocational (POST) state as the newly formed A-site-bound peptidyl-tRNA and P-site-bound deacylated tRNA move to the P and E sites, respectively. Catalyzes the coordinated movement of the two tRNA molecules, the mRNA and conformational changes in the ribosome. The polypeptide is Elongation factor G (Cyanothece sp. (strain PCC 7425 / ATCC 29141)).